Reading from the N-terminus, the 202-residue chain is Small ribosomal subunit protein uS4 (202 aa).

Residues E17–R42 are disordered. Residues M90 to H152 form the S4 RNA-binding domain.

This sequence belongs to the universal ribosomal protein uS4 family. As to quaternary structure, part of the 30S ribosomal subunit. Contacts protein S5. The interaction surface between S4 and S5 is involved in control of translational fidelity.

In terms of biological role, one of the primary rRNA binding proteins, it binds directly to 16S rRNA where it nucleates assembly of the body of the 30S subunit. Functionally, with S5 and S12 plays an important role in translational accuracy. The sequence is that of Small ribosomal subunit protein uS4 from Acaryochloris marina (strain MBIC 11017).